Here is a 100-residue protein sequence, read N- to C-terminus: Small ribosomal subunit protein uS14c (100 aa).

The protein belongs to the universal ribosomal protein uS14 family. As to quaternary structure, part of the 30S ribosomal subunit.

The protein resides in the plastid. It is found in the chloroplast. Its function is as follows. Binds 16S rRNA, required for the assembly of 30S particles. The protein is Small ribosomal subunit protein uS14c of Anthoceros angustus (Hornwort).